We begin with the raw amino-acid sequence, 366 residues long: Methyltransferase phm5 (366 aa).

Residues 204 to 205, Asp230, 255 to 256, Arg273, and Arg274 each bind S-adenosyl-L-methionine; these read GG and SM.

Belongs to the class I-like SAM-binding methyltransferase superfamily. Cation-independent O-methyltransferase family.

Its pathway is secondary metabolite biosynthesis. Functionally, methyltransferase; part of the gene cluster that mediates the biosynthesis of the trans-fused decalin-containing tetramic acid phomasetin, the stereochemical opposite of the HIV-1 integrase inhibitor equisetin. The PKS module of phm1 together with the enoylreductase phm4 catalyze the formation of the polyketide unit which is then conjugated to L-serine by the condensation domain of the phm1 NRPS module. Activity of the Dieckmann cyclase domain (RED) of phm1 results in release of the Dieckmann product intermediate. The Diels-Alderase phm7 then uses the Dieckmann product of phm1 as substrate and catalyzes the Diels-Alder cycloaddition to form the decalin ring of N-desmethylphomasetin. N-desmethylphomasetin is further methylated to phomasetin by the methyltransferase phm5. This is Methyltransferase phm5 from Pyrenochaetopsis sp.